Here is a 392-residue protein sequence, read N- to C-terminus: Iron-sulfur cluster assembly SufBD family protein ML0594 (392 aa).

The protein belongs to the iron-sulfur cluster assembly SufBD family.

The sequence is that of Iron-sulfur cluster assembly SufBD family protein ML0594 from Mycobacterium leprae (strain TN).